Here is a 320-residue protein sequence, read N- to C-terminus: MASILRSVATTSAVVAAASAIPIAIAFSSSSSSSSTNPKSQSLNFSFLSRSSPRLLGLSRSFVSSPMATALTSDRNLHQEDRAMPQLLTEFMVDMTCEGCVNAVKNKLETIEGIEKVEVDLSNQVVRILGSSPVKAMTQALEQTGRKARLIGQGVPQDFLVSAAVAEFKGPDIFGVVRFAQVSMELARIEANFTGLSPGTHSWCINEYGDLTNGAASTGSLYNPFQDQTGTEPLGDLGTLEADKNGEAFYSGKKEKLKVADLIGRAVVVYKTDDNKSGPGLTAAVIARSAGVGENYKKLCSCDGTVIWEATNSDFVASKV.

A chloroplast-targeting transit peptide spans 1–67; that stretch reads MASILRSVAT…LSRSFVSSPM (67 aa). Residues 86–149 form the HMA domain; sequence QLLTEFMVDM…ALEQTGRKAR (64 aa). Residues C97, C100, C300, and C302 each contribute to the Cu cation site.

This sequence in the C-terminal section; belongs to the Cu-Zn superoxide dismutase family. In terms of assembly, interacts with CSD1. The cofactor is Cu(2+). As to expression, expressed in roots, shoots, stems and flowers, and at lower levels in rosette and cauline leaves.

The protein localises to the plastid. The protein resides in the chloroplast. It is found in the cytoplasm. Its subcellular location is the cytosol. Its function is as follows. Copper chaperone for the superoxide dismutases CSD1, CSD2 and CSD3. Binds copper ions and delivers them specifically to CSDs. Is required for assistance in CSDs disulfide bond formation and thereby activation of CSDs. May be involved in the negative regulation of heat stress-responsive genes and thermotolerance. The chain is Copper chaperone for superoxide dismutase, chloroplastic/cytosolic (CCS) from Arabidopsis thaliana (Mouse-ear cress).